A 509-amino-acid chain; its full sequence is UDP-N-acetylmuramyl-tripeptide synthetase (509 aa).

124 to 130 provides a ligand contact to ATP; it reads GTNGKTS. Residues 164–165, Ser191, and Arg199 contribute to the UDP-N-acetyl-alpha-D-muramoyl-L-alanyl-D-glutamate site; that span reads TT. At Lys231 the chain carries N6-carboxylysine.

Belongs to the MurCDEF family. MurE subfamily. Post-translationally, carboxylation is probably crucial for Mg(2+) binding and, consequently, for the gamma-phosphate positioning of ATP.

The protein localises to the cytoplasm. The protein operates within cell wall biogenesis; peptidoglycan biosynthesis. In terms of biological role, catalyzes the addition of an amino acid to the nucleotide precursor UDP-N-acetylmuramoyl-L-alanyl-D-glutamate (UMAG) in the biosynthesis of bacterial cell-wall peptidoglycan. The protein is UDP-N-acetylmuramyl-tripeptide synthetase of Tropheryma whipplei (strain Twist) (Whipple's bacillus).